A 388-amino-acid chain; its full sequence is MNLHEYQAKQLFREYGLPVPQGIACDTAEEAVSAASQIGGDKWVIKCQVHAGGRGKAGGVELVSTKDGLREFAHKWLGKNLVTFQTDANGQPVNKLLVESCSDIANELYLGAVIDRASQRVTFMASTEGGVEIEKVAEETPELIHTAMIDPLVGAQAYQGRELAFKLGLSGKQIGQFTKIFLGLATLFEEKDLSLLEINPLVVTAQDDLICLDGKISIDSNAMYRQKALHAINDTTQDDEREMHAAQWELNYVALDGSIGCMVNGAGLAMGTMDIVHLHGGNPANFLDVGGGATKERVTEAFKIILSDDNVKAVLVNIFGGIVRCDLIADGVIGAVAEVGVTVPVIVRLEGNNADLGRKILAESGLNIIAAASLTDAAEQAVKAVGGK.

The 236-residue stretch at 9 to 244 (KQLFREYGLP…TTQDDEREMH (236 aa)) folds into the ATP-grasp domain. ATP-binding positions include Lys46, 53–55 (GRG), Glu99, Ser102, and Glu107. Positions 199 and 213 each coordinate Mg(2+). Residues Asn264 and 321–323 (GIV) each bind substrate.

This sequence belongs to the succinate/malate CoA ligase beta subunit family. As to quaternary structure, heterotetramer of two alpha and two beta subunits. It depends on Mg(2+) as a cofactor.

It catalyses the reaction succinate + ATP + CoA = succinyl-CoA + ADP + phosphate. The enzyme catalyses GTP + succinate + CoA = succinyl-CoA + GDP + phosphate. Its pathway is carbohydrate metabolism; tricarboxylic acid cycle; succinate from succinyl-CoA (ligase route): step 1/1. Its function is as follows. Succinyl-CoA synthetase functions in the citric acid cycle (TCA), coupling the hydrolysis of succinyl-CoA to the synthesis of either ATP or GTP and thus represents the only step of substrate-level phosphorylation in the TCA. The beta subunit provides nucleotide specificity of the enzyme and binds the substrate succinate, while the binding sites for coenzyme A and phosphate are found in the alpha subunit. In Psychromonas ingrahamii (strain DSM 17664 / CCUG 51855 / 37), this protein is Succinate--CoA ligase [ADP-forming] subunit beta.